Reading from the N-terminus, the 152-residue chain is Arginine repressor (152 aa).

Belongs to the ArgR family.

The protein resides in the cytoplasm. The protein operates within amino-acid biosynthesis; L-arginine biosynthesis [regulation]. In terms of biological role, regulates arginine biosynthesis genes. The polypeptide is Arginine repressor (Thermotoga sp. (strain RQ2)).